The chain runs to 511 residues: ATP synthase subunit alpha (511 aa).

Gly169–Thr176 provides a ligand contact to ATP.

This sequence belongs to the ATPase alpha/beta chains family. In terms of assembly, F-type ATPases have 2 components, CF(1) - the catalytic core - and CF(0) - the membrane proton channel. CF(1) has five subunits: alpha(3), beta(3), gamma(1), delta(1), epsilon(1). CF(0) has three main subunits: a(1), b(2) and c(9-12). The alpha and beta chains form an alternating ring which encloses part of the gamma chain. CF(1) is attached to CF(0) by a central stalk formed by the gamma and epsilon chains, while a peripheral stalk is formed by the delta and b chains.

It is found in the cell membrane. It catalyses the reaction ATP + H2O + 4 H(+)(in) = ADP + phosphate + 5 H(+)(out). Its function is as follows. Produces ATP from ADP in the presence of a proton gradient across the membrane. The alpha chain is a regulatory subunit. The protein is ATP synthase subunit alpha of Latilactobacillus sakei subsp. sakei (strain 23K) (Lactobacillus sakei subsp. sakei).